A 121-amino-acid polypeptide reads, in one-letter code: MAQRVTFRRRNPYNTRSNKIKVVKTPGGILRAQHVKKLATRPKCGDCGSALQGISTLRPRQYATVSKTHKTVSRAYGGSRCANCVKERIVRAFLIEEQKIVKKVVKEQTEAAKKSEKKSKK.

Belongs to the eukaryotic ribosomal protein eL34 family. Component of the large ribosomal subunit (LSU). Mature yeast ribosomes consist of a small (40S) and a large (60S) subunit. The 40S small subunit contains 1 molecule of ribosomal RNA (18S rRNA) and 33 different proteins (encoded by 57 genes). The large 60S subunit contains 3 rRNA molecules (25S, 5.8S and 5S rRNA) and 46 different proteins (encoded by 81 genes).

It localises to the cytoplasm. Functionally, component of the ribosome, a large ribonucleoprotein complex responsible for the synthesis of proteins in the cell. The small ribosomal subunit (SSU) binds messenger RNAs (mRNAs) and translates the encoded message by selecting cognate aminoacyl-transfer RNA (tRNA) molecules. The large subunit (LSU) contains the ribosomal catalytic site termed the peptidyl transferase center (PTC), which catalyzes the formation of peptide bonds, thereby polymerizing the amino acids delivered by tRNAs into a polypeptide chain. The nascent polypeptides leave the ribosome through a tunnel in the LSU and interact with protein factors that function in enzymatic processing, targeting, and the membrane insertion of nascent chains at the exit of the ribosomal tunnel. The protein is Large ribosomal subunit protein eL34B of Saccharomyces cerevisiae (strain ATCC 204508 / S288c) (Baker's yeast).